A 397-amino-acid polypeptide reads, in one-letter code: Chorismate synthase (397 aa).

2 residues coordinate NADP(+): Arg40 and Arg46. FMN-binding positions include 129–131 (RSS), 257–258 (QA), Gly302, 317–321 (KPISS), and Arg343.

Belongs to the chorismate synthase family. In terms of assembly, homotetramer. Requires FMNH2 as cofactor.

The enzyme catalyses 5-O-(1-carboxyvinyl)-3-phosphoshikimate = chorismate + phosphate. It functions in the pathway metabolic intermediate biosynthesis; chorismate biosynthesis; chorismate from D-erythrose 4-phosphate and phosphoenolpyruvate: step 7/7. Its function is as follows. Catalyzes the anti-1,4-elimination of the C-3 phosphate and the C-6 proR hydrogen from 5-enolpyruvylshikimate-3-phosphate (EPSP) to yield chorismate, which is the branch point compound that serves as the starting substrate for the three terminal pathways of aromatic amino acid biosynthesis. This reaction introduces a second double bond into the aromatic ring system. In Chlorobium limicola (strain DSM 245 / NBRC 103803 / 6330), this protein is Chorismate synthase.